The sequence spans 165 residues: NADPH-dependent 7-cyano-7-deazaguanine reductase (165 aa).

Cys-56 functions as the Thioimide intermediate in the catalytic mechanism. The active-site Proton donor is Asp-63. Substrate-binding positions include 78 to 80 (VES) and 97 to 98 (HE).

Belongs to the GTP cyclohydrolase I family. QueF type 1 subfamily.

The protein localises to the cytoplasm. The enzyme catalyses 7-aminomethyl-7-carbaguanine + 2 NADP(+) = 7-cyano-7-deazaguanine + 2 NADPH + 3 H(+). It participates in tRNA modification; tRNA-queuosine biosynthesis. Functionally, catalyzes the NADPH-dependent reduction of 7-cyano-7-deazaguanine (preQ0) to 7-aminomethyl-7-deazaguanine (preQ1). This chain is NADPH-dependent 7-cyano-7-deazaguanine reductase, found in Bacillus cytotoxicus (strain DSM 22905 / CIP 110041 / 391-98 / NVH 391-98).